We begin with the raw amino-acid sequence, 362 residues long: Heat-inducible transcription repressor HrcA (362 aa).

This sequence belongs to the HrcA family.

In terms of biological role, negative regulator of class I heat shock genes (grpE-dnaK-dnaJ and groELS operons). Prevents heat-shock induction of these operons. The sequence is that of Heat-inducible transcription repressor HrcA from Bradyrhizobium sp. (strain ORS 278).